The sequence spans 383 residues: S-adenosylmethionine synthase (383 aa).

H22 serves as a coordination point for ATP. D24 lines the Mg(2+) pocket. Position 50 (E50) interacts with K(+). L-methionine is bound by residues E63 and Q99. Residues 99–109 form a flexible loop region; that stretch reads QSSEINQAVQS. Residues 160 to 162, D235, 241 to 242, S258, and K262 contribute to the ATP site; these read DMK and RK. D235 is a binding site for L-methionine. K266 is an L-methionine binding site.

It belongs to the AdoMet synthase family. Homotetramer; dimer of dimers. Mg(2+) serves as cofactor. K(+) is required as a cofactor.

Its subcellular location is the cytoplasm. It carries out the reaction L-methionine + ATP + H2O = S-adenosyl-L-methionine + phosphate + diphosphate. The protein operates within amino-acid biosynthesis; S-adenosyl-L-methionine biosynthesis; S-adenosyl-L-methionine from L-methionine: step 1/1. Catalyzes the formation of S-adenosylmethionine (AdoMet) from methionine and ATP. The overall synthetic reaction is composed of two sequential steps, AdoMet formation and the subsequent tripolyphosphate hydrolysis which occurs prior to release of AdoMet from the enzyme. The polypeptide is S-adenosylmethionine synthase (Mycoplasma pneumoniae (strain ATCC 29342 / M129 / Subtype 1) (Mycoplasmoides pneumoniae)).